A 570-amino-acid chain; its full sequence is Dihydroxy-acid dehydratase 2 (570 aa).

A [2Fe-2S] cluster-binding site is contributed by Cys51. Asp83 contributes to the Mg(2+) binding site. [2Fe-2S] cluster is bound at residue Cys124. Mg(2+) is bound by residues Asp125 and Lys126. Lys126 bears the N6-carboxylysine mark. Cys196 provides a ligand contact to [2Fe-2S] cluster. Glu446 serves as a coordination point for Mg(2+). Ser472 functions as the Proton acceptor in the catalytic mechanism.

Belongs to the IlvD/Edd family. Homodimer. The cofactor is [2Fe-2S] cluster. It depends on Mg(2+) as a cofactor.

It carries out the reaction (2R)-2,3-dihydroxy-3-methylbutanoate = 3-methyl-2-oxobutanoate + H2O. The catalysed reaction is (2R,3R)-2,3-dihydroxy-3-methylpentanoate = (S)-3-methyl-2-oxopentanoate + H2O. It functions in the pathway amino-acid biosynthesis; L-isoleucine biosynthesis; L-isoleucine from 2-oxobutanoate: step 3/4. It participates in amino-acid biosynthesis; L-valine biosynthesis; L-valine from pyruvate: step 3/4. Functionally, functions in the biosynthesis of branched-chain amino acids. Catalyzes the dehydration of (2R,3R)-2,3-dihydroxy-3-methylpentanoate (2,3-dihydroxy-3-methylvalerate) into 2-oxo-3-methylpentanoate (2-oxo-3-methylvalerate) and of (2R)-2,3-dihydroxy-3-methylbutanoate (2,3-dihydroxyisovalerate) into 2-oxo-3-methylbutanoate (2-oxoisovalerate), the penultimate precursor to L-isoleucine and L-valine, respectively. This chain is Dihydroxy-acid dehydratase 2, found in Bordetella bronchiseptica (strain ATCC BAA-588 / NCTC 13252 / RB50) (Alcaligenes bronchisepticus).